Reading from the N-terminus, the 88-residue chain is Small ribosomal subunit protein uS15 (88 aa).

It belongs to the universal ribosomal protein uS15 family. In terms of assembly, part of the 30S ribosomal subunit. Forms a bridge to the 50S subunit in the 70S ribosome, contacting the 23S rRNA.

Functionally, one of the primary rRNA binding proteins, it binds directly to 16S rRNA where it helps nucleate assembly of the platform of the 30S subunit by binding and bridging several RNA helices of the 16S rRNA. In terms of biological role, forms an intersubunit bridge (bridge B4) with the 23S rRNA of the 50S subunit in the ribosome. In Mycoplasma mycoides subsp. mycoides SC (strain CCUG 32753 / NCTC 10114 / PG1), this protein is Small ribosomal subunit protein uS15.